We begin with the raw amino-acid sequence, 80 residues long: RNA-binding protein Hfq (80 aa).

Residues 9-68 (EPFLNALRKERIPVSIYLVNGIKLQGQIDSFDQFVVLLKNTVSQMVYKHAISTIVPSRPV) enclose the Sm domain.

This sequence belongs to the Hfq family. As to quaternary structure, homohexamer.

Its function is as follows. RNA chaperone that binds small regulatory RNA (sRNAs) and mRNAs to facilitate mRNA translational regulation in response to envelope stress, environmental stress and changes in metabolite concentrations. Also binds with high specificity to tRNAs. In Thioalkalivibrio sulfidiphilus (strain HL-EbGR7), this protein is RNA-binding protein Hfq.